Consider the following 336-residue polypeptide: MSGTQMSAFLRQYLADEDKKIRAQFKESDPNNKLILWMHEKTRITEEDLARPYTEDEVKELCLRTKVKVDMTAWNCLWEAKKRFEAKGRFVNKSERFINRMYVKAVRKKMVQPYPEEFVAQRREVVAAETKKHNISRLDRWQRKKTQNLSAQESSPARGAHLSFIDAMQTHEDQVNANLSSVSQINFQVEAIARPAVSSSDLSGIGDDEDEHQQSEFQDEHINCPETAINENSVRCDPINSGRMRTGCINSQGNNNTESDPDYYMFGTQLSSLLRPTSTQEPDDQVNCPETEMNESWVRCDQINSESMSIGPSIDSEGTITFQNSESEPIDVDSIA.

The interval 107–328 (RKKMVQPYPE…TITFQNSESE (222 aa)) is required for binding to Su(var)205. 2 disordered regions span residues 137–158 (RLDRWQRKKTQNLSAQESSPAR) and 199–218 (SSDLSGIGDDEDEHQQSEFQ). 2 short sequence motifs (su(var)205-binding Pro-containing repeat) span residues 225 to 231 (PETAINE) and 289 to 295 (PETEMNE). Over residues 308-327 (MSIGPSIDSEGTITFQNSES) the composition is skewed to polar residues. Residues 308–336 (MSIGPSIDSEGTITFQNSESEPIDVDSIA) form a disordered region.

In terms of assembly, interacts (via C-terminus) with Su(var)205 dimer (via hinge and chromoshadow domain) and with moi to form the terminin, telomere-capping, complex. Interacts with HP6, which is also part of the terminin complex.

Its subcellular location is the nucleus. The protein localises to the chromosome. It is found in the telomere. Its function is as follows. Binds to chromosome ends in a sequence-dependent manner and is required for telomere capping. The protein is Telomere-binding protein cav of Drosophila sechellia (Fruit fly).